The sequence spans 190 residues: Xanthine phosphoribosyltransferase (190 aa).

2 residues coordinate xanthine: Leu-20 and Asn-27. Residue 128 to 132 (ANGKA) coordinates 5-phospho-alpha-D-ribose 1-diphosphate. Lys-156 serves as a coordination point for xanthine.

Belongs to the purine/pyrimidine phosphoribosyltransferase family. Xpt subfamily. As to quaternary structure, homodimer.

Its subcellular location is the cytoplasm. It catalyses the reaction XMP + diphosphate = xanthine + 5-phospho-alpha-D-ribose 1-diphosphate. It participates in purine metabolism; XMP biosynthesis via salvage pathway; XMP from xanthine: step 1/1. Its function is as follows. Converts the preformed base xanthine, a product of nucleic acid breakdown, to xanthosine 5'-monophosphate (XMP), so it can be reused for RNA or DNA synthesis. The polypeptide is Xanthine phosphoribosyltransferase (Pseudomonas fluorescens (strain Pf0-1)).